We begin with the raw amino-acid sequence, 709 residues long: Homeobox-leucine zipper protein HDG4 (709 aa).

Residues 61-92 (ESGSGKSTGSGHDPVENTAIEQEPPAAKKKRY) are disordered. The segment at residues 88–147 (KKKRYHRHTASQIQQMEALFKENAHPDTKTRLRLSKKLGLSPIQVKFWFQNKRTQIKAQQ) is a DNA-binding region (homeobox). Residues 137-205 (QNKRTQIKAQ…LDRLRSIVSM (69 aa)) are a coiled coil. Residues 229–466 (AEEEKAIDME…LKRQCERMAS (238 aa)) enclose the START domain.

It belongs to the HD-ZIP homeobox family. Class IV subfamily. Expressed in flowers.

The protein resides in the nucleus. Probable transcription factor. The polypeptide is Homeobox-leucine zipper protein HDG4 (Arabidopsis thaliana (Mouse-ear cress)).